The primary structure comprises 79 residues: Large ribosomal subunit protein bL28 (79 aa).

Positions 1–26 are disordered; it reads MAKVCQVTGKRPQSGNNVSHANKKTN. The span at 11 to 20 shows a compositional bias: polar residues; that stretch reads RPQSGNNVSH.

The protein belongs to the bacterial ribosomal protein bL28 family.

The protein is Large ribosomal subunit protein bL28 of Coxiella burnetii (strain CbuK_Q154) (Coxiella burnetii (strain Q154)).